The chain runs to 284 residues: Probable protein phosphatase 2C 41 (284 aa).

Residues 35-282 (SYGFYLVRGM…DDISCVVVRF (248 aa)) form the PPM-type phosphatase domain. Positions 72, 73, 234, and 273 each coordinate Mn(2+).

This sequence belongs to the PP2C family. It depends on Mg(2+) as a cofactor. The cofactor is Mn(2+).

It carries out the reaction O-phospho-L-seryl-[protein] + H2O = L-seryl-[protein] + phosphate. The enzyme catalyses O-phospho-L-threonyl-[protein] + H2O = L-threonyl-[protein] + phosphate. In Oryza sativa subsp. japonica (Rice), this protein is Probable protein phosphatase 2C 41.